Reading from the N-terminus, the 285-residue chain is Bifunctional protein FolD (285 aa).

Residues 165–167 and serine 190 contribute to the NADP(+) site; that span reads GRS.

It belongs to the tetrahydrofolate dehydrogenase/cyclohydrolase family. In terms of assembly, homodimer.

The enzyme catalyses (6R)-5,10-methylene-5,6,7,8-tetrahydrofolate + NADP(+) = (6R)-5,10-methenyltetrahydrofolate + NADPH. It carries out the reaction (6R)-5,10-methenyltetrahydrofolate + H2O = (6R)-10-formyltetrahydrofolate + H(+). The protein operates within one-carbon metabolism; tetrahydrofolate interconversion. Catalyzes the oxidation of 5,10-methylenetetrahydrofolate to 5,10-methenyltetrahydrofolate and then the hydrolysis of 5,10-methenyltetrahydrofolate to 10-formyltetrahydrofolate. This is Bifunctional protein FolD from Burkholderia mallei (strain NCTC 10247).